Reading from the N-terminus, the 368-residue chain is P2X receptor C (368 aa).

The Cytoplasmic segment spans residues 1 to 24 (MLDWDSILAYNTIKVVRIRDRRLG). Residues 25–45 (ILHLIFMIAIISYVVIYSAII) traverse the membrane as a helical segment. Over 46–368 (KKGYLSIEEP…DKLYHNIEAL (323 aa)) the chain is Lumenal. The pore-forming motif stretch occupies residues 282–295 (RHAIRLIFIQTGVI).

This sequence belongs to the P2X receptor family.

It is found in the contractile vacuole membrane. Its function is as follows. P2X receptors are ligand-gated ion channels that play a role in intracellular calcium signaling. ATP does not evoke inward currents in p2xC. Not essential for osmoregulation. In Dictyostelium discoideum (Social amoeba), this protein is P2X receptor C (p2xC).